We begin with the raw amino-acid sequence, 209 residues long: Orotate phosphoribosyltransferase (209 aa).

5-phospho-alpha-D-ribose 1-diphosphate-binding positions include Arg-96, Lys-100, His-102, and 122–130 (EDLISTGGS). Ser-126 is an orotate binding site.

This sequence belongs to the purine/pyrimidine phosphoribosyltransferase family. PyrE subfamily. As to quaternary structure, homodimer. Mg(2+) is required as a cofactor.

The catalysed reaction is orotidine 5'-phosphate + diphosphate = orotate + 5-phospho-alpha-D-ribose 1-diphosphate. It participates in pyrimidine metabolism; UMP biosynthesis via de novo pathway; UMP from orotate: step 1/2. Catalyzes the transfer of a ribosyl phosphate group from 5-phosphoribose 1-diphosphate to orotate, leading to the formation of orotidine monophosphate (OMP). The polypeptide is Orotate phosphoribosyltransferase (Listeria monocytogenes serotype 4b (strain F2365)).